Reading from the N-terminus, the 308-residue chain is Olfactory receptor OR9H1 (308 aa).

The Extracellular segment spans residues Met1 to Phe26. A helical membrane pass occupies residues Leu27–Ile47. Residues Trp48–Tyr58 lie on the Cytoplasmic side of the membrane. Residues Ala59–Ala81 form a helical membrane-spanning segment. Residues Asn82–Cys95 are Extracellular-facing. Cysteines 95 and 177 form a disulfide. The chain crosses the membrane as a helical span at residues Ala96–Met116. Over Ala117–Gln137 the chain is Cytoplasmic. Residues Val138–Thr158 form a helical membrane-spanning segment. Residues Thr159–Ser203 are Extracellular-facing. A helical transmembrane segment spans residues Ile204–Leu224. The Cytoplasmic portion of the chain corresponds to Arg225 to Gly245. Residues Val246–Met266 form a helical membrane-spanning segment. Residues Glu267–Ser269 are Extracellular-facing. A helical transmembrane segment spans residues Lys270 to Leu290. At Arg291–Leu308 the chain is on the cytoplasmic side.

It belongs to the G-protein coupled receptor 1 family.

It is found in the cell membrane. Functionally, odorant receptor. The protein is Olfactory receptor OR9H1 of Homo sapiens (Human).